Here is an 838-residue protein sequence, read N- to C-terminus: Protein kintoun (838 aa).

5 disordered regions span residues 106-125 (RPKN…LNWS), 212-238 (NPTA…GKPE), 370-411 (LRHF…TSSP), 557-696 (NAPL…DSCS), and 776-838 (QQRR…EMDD). The span at 114-125 (DPSSGSRGLNWS) shows a compositional bias: polar residues. A compositionally biased stretch (basic and acidic residues) spans 370–380 (LRHFSREDSGV). The residue at position 378 (S378) is a Phosphoserine. The span at 389–398 (PVEEDPDGEL) shows a compositional bias: acidic residues. Basic and acidic residues predominate over residues 557-572 (NAPLDVEFERNQEGHA). A compositionally biased stretch (acidic residues) spans 583–592 (EEEEEEEDKE). A compositionally biased stretch (low complexity) spans 601–611 (DQQQQQQVQNK). Basic residues-rich tracts occupy residues 612–623 (KSGKKQRKRNKK) and 673–683 (RSHRGILKRFS). Phosphoserine is present on S781. A compositionally biased stretch (basic and acidic residues) spans 789–802 (EETRGSALKQKENP).

It belongs to the PIH1 family. Kintoun subfamily. In terms of assembly, interacts with Pp1alpha-96A, Pp1-87B, Pp1-13C and flw.

It is found in the cytoplasm. In terms of biological role, required for cytoplasmic pre-assembly of axonemal dyneins, thereby playing a central role in motility in cilia and flagella. Involved in pre-assembly of dynein arm complexes in the cytoplasm before intraflagellar transport loads them for the ciliary compartment. The polypeptide is Protein kintoun (Drosophila sechellia (Fruit fly)).